The chain runs to 919 residues: Transcriptional regulatory protein EDS1 (919 aa).

A disordered region spans residues 1-54 (MSHHVPNLYGTPIRDPHEHKRNSASMGEVNQSVSSRNCERGSEKGTKQRKKASR). Over residues 23–36 (SASMGEVNQSVSSR) the composition is skewed to polar residues. Residues 37–46 (NCERGSEKGT) are compositionally biased toward basic and acidic residues. The zn(2)-C6 fungal-type DNA-binding region spans 56 to 85 (CDQCRRKRIKCRFDKHTGVCQGCLEVGEKC). The interval 297–338 (AGCPNKKLGTDGRSDKWDKNSTWKPVYRSSNPSHPSTEKNVS) is disordered. The segment covering 304 to 317 (LGTDGRSDKWDKNS) has biased composition (basic and acidic residues). The segment covering 318-338 (TWKPVYRSSNPSHPSTEKNVS) has biased composition (polar residues).

As to quaternary structure, binds DNA in a sequence-specific manner.

The protein resides in the nucleus. The sequence is that of Transcriptional regulatory protein EDS1 (EDS1) from Saccharomyces cerevisiae (strain Lalvin EC1118 / Prise de mousse) (Baker's yeast).